Reading from the N-terminus, the 408-residue chain is Secreted mono- and diacylglycerol lipase 2 (408 aa).

The first 24 residues, 1-24, serve as a signal peptide directing secretion; that stretch reads MRFKLADSLSLITVQLILATSTLA. N177 carries an N-linked (GlcNAc...) asparagine glycan. S217 functions as the Nucleophile in the catalytic mechanism. Active-site residues include D283 and H374.

This sequence belongs to the AB hydrolase superfamily. Lipase family. Class 3 subfamily.

It localises to the secreted. It carries out the reaction a monoacylglycerol + H2O = glycerol + a fatty acid + H(+). The enzyme catalyses a diacylglycerol + H2O = a monoacylglycerol + a fatty acid + H(+). In terms of biological role, secreted mono- and diacylglycerol lipase involved in plant virulence. Has a substrate preference for p-nitrophenyl esters with a carbon chain length of C10 (p-nitrophenyl caprate). The sequence is that of Secreted mono- and diacylglycerol lipase 2 from Gibberella zeae (strain ATCC MYA-4620 / CBS 123657 / FGSC 9075 / NRRL 31084 / PH-1) (Wheat head blight fungus).